A 727-amino-acid chain; its full sequence is DNA ligase (727 aa).

NAD(+)-binding positions include 71–75 (DGEFD), 120–121 (SL), and glutamate 150. Lysine 152 functions as the N6-AMP-lysine intermediate in the catalytic mechanism. NAD(+)-binding residues include arginine 173, glutamate 213, lysine 329, and lysine 353. Zn(2+) is bound by residues cysteine 447, cysteine 450, cysteine 466, and cysteine 472. Residues 636-725 (SIERHLTGLS…PEAAAEAALP (90 aa)) enclose the BRCT domain.

It belongs to the NAD-dependent DNA ligase family. LigA subfamily. Mg(2+) serves as cofactor. The cofactor is Mn(2+).

It carries out the reaction NAD(+) + (deoxyribonucleotide)n-3'-hydroxyl + 5'-phospho-(deoxyribonucleotide)m = (deoxyribonucleotide)n+m + AMP + beta-nicotinamide D-nucleotide.. DNA ligase that catalyzes the formation of phosphodiester linkages between 5'-phosphoryl and 3'-hydroxyl groups in double-stranded DNA using NAD as a coenzyme and as the energy source for the reaction. It is essential for DNA replication and repair of damaged DNA. This Saccharopolyspora erythraea (strain ATCC 11635 / DSM 40517 / JCM 4748 / NBRC 13426 / NCIMB 8594 / NRRL 2338) protein is DNA ligase.